Reading from the N-terminus, the 295-residue chain is Small ribosomal subunit protein uS2B (295 aa).

Serine 2 is modified (N-acetylserine). Positions threonine 54–glutamine 113 are interaction with PPP1R16B. 2 laminin-binding regions span residues isoleucine 161–arginine 180 and arginine 205–glycine 229. Over residues alanine 218–phenylalanine 227 the composition is skewed to basic and acidic residues. The disordered stretch occupies residues alanine 218–glutamine 242. [DE]-W-[ST] repeat units lie at residues glutamate 230–threonine 232, aspartate 247–serine 249, aspartate 266–serine 268, aspartate 275–serine 277, and aspartate 293–serine 295. Positions glutamine 242–serine 295 are laminin-binding. The disordered stretch occupies residues aspartate 266 to serine 295.

Belongs to the universal ribosomal protein uS2 family. In terms of assembly, monomer (37LRP) and homodimer (67LR). Component of the small ribosomal subunit. Mature ribosomes consist of a small (40S) and a large (60S) subunit. The 40S subunit contains about 33 different proteins and 1 molecule of RNA (18S). The 60S subunit contains about 49 different proteins and 3 molecules of RNA (28S, 5.8S and 5S). Interacts with RPS21. Interacts with several laminins including at least LAMB1. Interacts with MDK. The mature dimeric form interacts with PPP1R16B (via its fourth ankyrin repeat). Interacts with PPP1CA only in the presence of PPP1R16B. Post-translationally, acylated. Acylation may be a prerequisite for conversion of the monomeric 37 kDa laminin receptor precursor (37LRP) to the mature dimeric 67 kDa laminin receptor (67LR), and may provide a mechanism for membrane association. Cleaved by stromelysin-3 (ST3) at the cell surface. Cleavage by stromelysin-3 may be a mechanism to alter cell-extracellular matrix interactions.

The protein localises to the cell membrane. The protein resides in the cytoplasm. Its subcellular location is the nucleus. Required for the assembly and/or stability of the 40S ribosomal subunit. Required for the processing of the 20S rRNA-precursor to mature 18S rRNA in a late step of the maturation of 40S ribosomal subunits. Also functions as a cell surface receptor for laminin. Plays a role in cell adhesion to the basement membrane and in the consequent activation of signaling transduction pathways. May play a role in cell fate determination and tissue morphogenesis. Also acts as a receptor for several other ligands, including the pathogenic prion protein, viruses, and bacteria. Acts as a PPP1R16B-dependent substrate of PPP1CA. In Homo sapiens (Human), this protein is Small ribosomal subunit protein uS2B.